A 1025-amino-acid polypeptide reads, in one-letter code: MSNKKQKEEINTAGGSVILKTMVRDKDKEQKEEKREKKEKKRLEKKEAENVKKEKKKEKKELKKIGKAGRSGSITSDSSTHSGAQEFDSYGNDSNGGGGGLSASIDSNGLSSSGQPMQTRHLEKEVGEKQGIYSLSSQDRSSSLPHSSQDDQAKPLITESEIFSSESFLIAVSDTDHLGPAIKSVFENNKEKEVIKILNAYIAQKDLDIEKICGENHEGFINSVTAFLGLKGENLDLKQDVINLNYELQEIGRKYVTKAEELFAYKQIKDNIKRTKEVLNNCQYAILLGMKVDEYVQQKKYYQAIKNMDQLHNVYLKKLSDFQFARNMDYNIPVLKEKIKKLVKDEFNQWMVEIKEKSAVIGKLGMIQTSKKLLKEREINPLKIKTTFGENEQIWDKILDIPPIINSSSIGSLALYPTLNSPVTAPIYSPNSGKTPSSFGFNKQINEKDLKEDINQFSPFDESDIQFHPLYQCLFIHASIGQLEEFQAYYTLNRLLQFQLVIQPKESGQVWELFLQQILGYFMVESKVIDSTEPFLSKTTINDSWNSALVKVTSVLQELFTHCVDTQPLIAFKKFVLIFTNTMSFYSYHVQPLYYFLDTMKEKYCQFSIKEAVERFTIILERDSHCSLIIESLEEYKSLILANKLDILERQQLRQLQNSLNNNQFQFGDKNLNNNNNNDDDDDYFDEDENEDDKISKRLPKSFLFSKMVPQFYTLIKKFISEFYEFSDQLTENENFIIRSTDTLIKKINEVLYSYLTQSQAVPQVIQLVINLQHLISGCSFFKDYLNSLILGEDYQKNQSIVNETNKVILNSQNLLYTTKSHGEKLIIKLCEQKIEDLMSSAANIEWFPQNAIDDRPRDYIIDVCTFLEVTLPFISPLSQNLKEEFITKAFKNISESLFSLIYDDQLKKLNLQGVKSFDADLKYIETYVKEKANEKERTTTTSRNMVGYFVELRQLTNFLLSDNPEDFVDPKIKAKHYNLITNIPQLLNILNKYKEESKGFTTSKEIKDRNKKIADAIKKIKDSL.

2 stretches are compositionally biased toward basic and acidic residues: residues Met1–Ile10 and Met22–Lys52. 3 disordered regions span residues Met1 to Leu122, Leu135 to Lys154, and Gln666 to Glu691. A coiled-coil region spans residues Leu19 to Ala68. A compositionally biased stretch (low complexity) spans Ser71 to Asp93. Residues Ser104–Gln118 show a composition bias toward polar residues. 2 stretches are compositionally biased toward low complexity: residues Leu135 to Ser147 and Gln666 to Asn677. The segment covering Asn678 to Glu691 has biased composition (acidic residues).

Belongs to the SEC15 family. As to quaternary structure, the exocyst complex is composed of sec3/exoc1, sec5/exoc2, sec6/exoc3, sec8/exoc4, sec10/exoc5, sec15/exoc6, exo70/exoc7 and exo84/exoc8.

It localises to the cytoplasm. The protein resides in the perinuclear region. It is found in the midbody. Its subcellular location is the midbody ring. Its function is as follows. Component of the exocyst complex involved in the docking of exocytic vesicles with fusion sites on the plasma membrane. This Dictyostelium discoideum (Social amoeba) protein is Exocyst complex component 6 (exoc6).